The sequence spans 134 residues: Small ribosomal subunit protein uS8c (134 aa).

The protein belongs to the universal ribosomal protein uS8 family. Part of the 30S ribosomal subunit.

The protein localises to the plastid. It is found in the chloroplast. In terms of biological role, one of the primary rRNA binding proteins, it binds directly to 16S rRNA central domain where it helps coordinate assembly of the platform of the 30S subunit. The protein is Small ribosomal subunit protein uS8c (rps8) of Populus alba (White poplar).